The chain runs to 330 residues: AH receptor-interacting protein (330 aa).

In terms of domain architecture, PPIase FKBP-type spans 31–121; it reads GTKATFHFRT…KDPLEGQRHC (91 aa). Ser-43 carries the post-translational modification Phosphoserine. TPR repeat units lie at residues 179–212, 231–264, and 265–298; these read VPVI…LKNL, TPLL…YDDN, and VKAY…DPAL.

Interacts with RET in the pituitary gland; this interaction prevents the formation of the AIP-survivin complex.

The protein localises to the cytoplasm. May play a positive role in AHR-mediated (aromatic hydrocarbon receptor) signaling, possibly by influencing its receptivity for ligand and/or its nuclear targeting. The sequence is that of AH receptor-interacting protein (Aip) from Mus musculus (Mouse).